Reading from the N-terminus, the 191-residue chain is 3-isopropylmalate dehydratase small subunit (191 aa).

This sequence belongs to the LeuD family. LeuD type 1 subfamily. In terms of assembly, heterodimer of LeuC and LeuD.

It catalyses the reaction (2R,3S)-3-isopropylmalate = (2S)-2-isopropylmalate. The protein operates within amino-acid biosynthesis; L-leucine biosynthesis; L-leucine from 3-methyl-2-oxobutanoate: step 2/4. Functionally, catalyzes the isomerization between 2-isopropylmalate and 3-isopropylmalate, via the formation of 2-isopropylmaleate. The sequence is that of 3-isopropylmalate dehydratase small subunit from Staphylococcus saprophyticus subsp. saprophyticus (strain ATCC 15305 / DSM 20229 / NCIMB 8711 / NCTC 7292 / S-41).